Consider the following 106-residue polypeptide: Large ribosomal subunit protein uL22 (106 aa).

Belongs to the universal ribosomal protein uL22 family. Part of the 50S ribosomal subunit.

Its function is as follows. This protein binds specifically to 23S rRNA; its binding is stimulated by other ribosomal proteins, e.g. L4, L17, and L20. It is important during the early stages of 50S assembly. It makes multiple contacts with different domains of the 23S rRNA in the assembled 50S subunit and ribosome. In terms of biological role, the globular domain of the protein is located near the polypeptide exit tunnel on the outside of the subunit, while an extended beta-hairpin is found that lines the wall of the exit tunnel in the center of the 70S ribosome. The polypeptide is Large ribosomal subunit protein uL22 (Nautilia profundicola (strain ATCC BAA-1463 / DSM 18972 / AmH)).